Consider the following 353-residue polypeptide: Soluble interferon alpha/beta receptor OPG204 (353 aa).

Positions 1 to 21 (MTMKMMVHIYFVSLSLLLLLF) are cleaved as a signal peptide. 2 consecutive Ig-like C2-type domains span residues 67–139 (LGEP…KNGD) and 157–239 (PKTY…IVVS). Disulfide bonds link Cys-75-Cys-131 and Cys-174-Cys-223. 5 N-linked (GlcNAc...) asparagine; by host glycosylation sites follow: Asn-119, Asn-184, Asn-263, Asn-271, and Asn-323. The Ig-like V-type domain maps to 248-347 (PSQDHRFKLI…HNYYFEKTLT (100 aa)). A disulfide bond links Cys-274 and Cys-335.

The protein belongs to the interleukin-1 receptor family. Interacts with host IFNA1.

The protein localises to the secreted. Its function is as follows. Counteracts the antiviral effects of host IFN-alpha/beta and key IFN-inducible proteins involved in viral RNA degradation suxh as host OAS1. Acts as a soluble IFN-alpha receptor and thus inhibits the interaction between host IFN-alpha and its receptor. This is Soluble interferon alpha/beta receptor OPG204 (OPG204) from Homo sapiens (Human).